The chain runs to 274 residues: 2,3,4,5-tetrahydropyridine-2,6-dicarboxylate N-succinyltransferase (274 aa).

It belongs to the transferase hexapeptide repeat family.

It is found in the cytoplasm. The enzyme catalyses (S)-2,3,4,5-tetrahydrodipicolinate + succinyl-CoA + H2O = (S)-2-succinylamino-6-oxoheptanedioate + CoA. It participates in amino-acid biosynthesis; L-lysine biosynthesis via DAP pathway; LL-2,6-diaminopimelate from (S)-tetrahydrodipicolinate (succinylase route): step 1/3. The polypeptide is 2,3,4,5-tetrahydropyridine-2,6-dicarboxylate N-succinyltransferase (Shigella boydii serotype 18 (strain CDC 3083-94 / BS512)).